Reading from the N-terminus, the 489-residue chain is Beta-dihydromenaquinone-9 omega-hydroxylase (489 aa).

Cys-435 provides a ligand contact to heme.

Belongs to the cytochrome P450 family. Requires heme as cofactor.

It localises to the cytoplasm. The enzyme catalyses beta-dihydromenaquinone-9 + 2 reduced [2Fe-2S]-[ferredoxin] + O2 + 2 H(+) = omega-hydroxy-beta-dihydromenaquinone-9 + 2 oxidized [2Fe-2S]-[ferredoxin] + H2O. Involved in the biosynthesis of sulfomenaquinone (SMK, initially named S881 on the basis of its mass), which is localized in the outer envelope of M.bovis and negatively regulates its virulence. Catalyzes the hydroxylation of beta-dihydromenaquinone-9, leading to the formation of omega-hydroxy-beta-dihydromenaquinone-9. This is Beta-dihydromenaquinone-9 omega-hydroxylase (cyp128) from Mycobacterium bovis (strain ATCC BAA-935 / AF2122/97).